The chain runs to 75 residues: UPF0291 protein lmo1304 (75 aa).

Residues 56–75 (DPNGKDVTPHKVKQLRKNKY) are disordered. Residues 65-75 (HKVKQLRKNKY) show a composition bias toward basic residues.

Belongs to the UPF0291 family.

It is found in the cytoplasm. In Listeria monocytogenes serovar 1/2a (strain ATCC BAA-679 / EGD-e), this protein is UPF0291 protein lmo1304.